The primary structure comprises 219 residues: Lipid transferase CIDEB (219 aa).

A CIDE-N domain is found at 33 to 110 (PRQRPFRVCD…VLELGQSWSP (78 aa)).

It belongs to the CIDE family. As to quaternary structure, interacts with DFFA. Interacts with DFFB; inhibited by DFFB. Interacts with APOB. Interacts with PREB/SEC12; facilitating loading of SCAP-SREBP into COPII vesicles.

It is found in the lipid droplet. It localises to the endoplasmic reticulum membrane. The protein localises to the golgi apparatus. Its subcellular location is the cytoplasmic vesicle. The protein resides in the COPI-coated vesicle. Lipid transferase specifically expressed in hepatocytes, which promotes unilocular lipid droplet formation by mediating lipid droplet fusion. Lipid droplet fusion promotes their enlargement, restricting lipolysis and favoring lipid storage. Localizes on the lipid droplet surface, at focal contact sites between lipid droplets, and mediates atypical lipid droplet fusion by promoting directional net neutral lipid transfer from the smaller to larger lipid droplets. The transfer direction may be driven by the internal pressure difference between the contacting lipid droplet pair. Promotes lipid exchange and lipid droplet fusion in both small and large lipid droplet-containing hepatocytes. In addition to its role in lipid droplet fusion, also involved in cytoplasmic vesicle biogenesis and transport. Required for very-low-density lipoprotein (VLDL) lipidation and maturation. Probably involved in the biogenesis of VLDL transport vesicles by forming a COPII vesicle coat and facilitating the formation of endoplasmic reticulum-derived large vesicles. Also involved in sterol-regulated export of the SCAP-SREBP complex, composed of SCAP, SREBF1/SREBP1 and SREBF2/SREBP2, by promoting loading of SCAP-SREBP into COPII vesicles. May also activate apoptosis. The protein is Lipid transferase CIDEB (CIDEB) of Bos taurus (Bovine).